Consider the following 641-residue polypeptide: Sodium-dependent nutrient amino acid transporter 1 (641 aa).

A disordered region spans residues 1–36; that stretch reads MELKGVQPSNGSANGNGTTNAASTEKTDAEKHTPER. Over 1-38 the chain is Cytoplasmic; sequence MELKGVQPSNGSANGNGTTNAASTEKTDAEKHTPERTN. The span at 9-24 shows a compositional bias: low complexity; it reads SNGSANGNGTTNAAST. Positions 25 to 35 are enriched in basic and acidic residues; that stretch reads EKTDAEKHTPE. The next 3 membrane-spanning stretches (helical) occupy residues 39–59, 72–92, and 109–129; these read WGNG…LGNV, GAFL…MYYL, and SVVP…ICII. Residues asparagine 183 and asparagine 188 are each glycosylated (N-linked (GlcNAc...) asparagine). A run of 9 helical transmembrane segments spans residues 229-249, 258-278, 307-327, 341-361, 401-421, 441-461, 474-494, 516-536, and 552-572; these read PDWK…LVIM, AAYF…IRAV, AVVQ…MFAS, IVTT…FAIL, LFSV…IVAL, VALI…TPGG, TYVV…VYGL, CWSF…MVTI, and IAGW…GLWY.

Belongs to the sodium:neurotransmitter symporter (SNF) (TC 2.A.22) family.

Its subcellular location is the membrane. Unusual broad substrate spectrum amino acid:sodium cotransporter that promotes absorption of the D isomers of essential amino acids. Neutral amino acids are the preferred substrates, especially methionine and phenylalanine. The sequence is that of Sodium-dependent nutrient amino acid transporter 1 from Drosophila erecta (Fruit fly).